A 97-amino-acid polypeptide reads, in one-letter code: Protein Vpr (97 aa).

The homooligomerization stretch occupies residues 1–42; the sequence is MEQAPEDQGPQREPYNEWTLELLEELKREAVRHFPRPWLHSL. Phosphoserine; by host occurs at positions 79, 95, and 97.

The protein belongs to the HIV-1 VPR protein family. In terms of assembly, homooligomer, may form homodimer. Interacts with p6-gag region of the Pr55 Gag precursor protein through a (Leu-X-X)4 motif near the C-terminus of the P6gag protein. Interacts with host UNG. May interact with host RAD23A/HHR23A. Interacts with host VPRBP/DCAF1, leading to hijack the CUL4A-RBX1-DDB1-DCAF1/VPRBP complex, mediating ubiquitination of host proteins such as TERT and ZGPAT and arrest of the cell cycle in G2 phase. In terms of processing, phosphorylated on several residues by host. These phosphorylations regulate VPR activity for the nuclear import of the HIV-1 pre-integration complex.

Its subcellular location is the virion. It localises to the host nucleus. The protein resides in the host extracellular space. In terms of biological role, during virus replication, may deplete host UNG protein, and incude G2-M cell cycle arrest. Acts by targeting specific host proteins for degradation by the 26S proteasome, through association with the cellular CUL4A-DDB1 E3 ligase complex by direct interaction with host VPRPB/DCAF-1. Cell cycle arrest reportedly occurs within hours of infection and is not blocked by antiviral agents, suggesting that it is initiated by the VPR carried into the virion. Additionally, VPR induces apoptosis in a cell cycle dependent manner suggesting that these two effects are mechanistically linked. Detected in the serum and cerebrospinal fluid of AIDS patient, VPR may also induce cell death to bystander cells. Its function is as follows. During virus entry, plays a role in the transport of the viral pre-integration (PIC) complex to the host nucleus. This function is crucial for viral infection of non-dividing macrophages. May act directly at the nuclear pore complex, by binding nucleoporins phenylalanine-glycine (FG)-repeat regions. This Human immunodeficiency virus type 1 group M subtype B (isolate ARV2/SF2) (HIV-1) protein is Protein Vpr.